A 436-amino-acid chain; its full sequence is Probable glucose-6-phosphate isomerase (436 aa).

The active-site Proton donor is Glu-272. Residues His-293 and Lys-404 contribute to the active site.

The protein belongs to the GPI family.

Its subcellular location is the cytoplasm. The catalysed reaction is alpha-D-glucose 6-phosphate = beta-D-fructose 6-phosphate. It participates in carbohydrate biosynthesis; gluconeogenesis. It functions in the pathway carbohydrate degradation; glycolysis; D-glyceraldehyde 3-phosphate and glycerone phosphate from D-glucose: step 2/4. In terms of biological role, catalyzes the reversible isomerization of glucose-6-phosphate to fructose-6-phosphate. The chain is Probable glucose-6-phosphate isomerase from Haloarcula marismortui (strain ATCC 43049 / DSM 3752 / JCM 8966 / VKM B-1809) (Halobacterium marismortui).